A 242-amino-acid chain; its full sequence is uncharacterized protein (242 aa).

This is an uncharacterized protein from Acanthamoeba polyphaga mimivirus (APMV).